The chain runs to 185 residues: Large ribosomal subunit protein uL5 (185 aa).

This sequence belongs to the universal ribosomal protein uL5 family. In terms of assembly, part of the 50S ribosomal subunit; part of the 5S rRNA/L5/L18/L25 subcomplex. Contacts the 5S rRNA and the P site tRNA. Forms a bridge to the 30S subunit in the 70S ribosome.

This is one of the proteins that bind and probably mediate the attachment of the 5S RNA into the large ribosomal subunit, where it forms part of the central protuberance. In the 70S ribosome it contacts protein S13 of the 30S subunit (bridge B1b), connecting the 2 subunits; this bridge is implicated in subunit movement. Contacts the P site tRNA; the 5S rRNA and some of its associated proteins might help stabilize positioning of ribosome-bound tRNAs. This Nitrobacter winogradskyi (strain ATCC 25391 / DSM 10237 / CIP 104748 / NCIMB 11846 / Nb-255) protein is Large ribosomal subunit protein uL5.